The chain runs to 554 residues: Bifunctional epoxide hydrolase 2 (554 aa).

Positions 1–224 (MALRVAAFDL…KVTGTQFPEA (224 aa)) are phosphatase. Mg(2+) contacts are provided by Asp-9 and Asp-11. Lys-55 is modified (N6-succinyllysine). Residue 123-124 (TN) participates in phosphate binding. Lys-176 bears the N6-acetyllysine; alternate mark. At Lys-176 the chain carries N6-succinyllysine; alternate. Asp-185 lines the Mg(2+) pocket. An N6-acetyllysine mark is found at Lys-191 and Lys-215. An epoxide hydrolase region spans residues 233–554 (NDVSHGYVTV…VQNPSVTSKI (322 aa)). Positions 257-530 (PALCLCHGFP…CGHWTQIEKP (274 aa)) constitute an AB hydrolase-1 domain. The Nucleophile role is filled by Asp-333. The residue at position 368 (Ser-368) is a Phosphoserine. At Lys-371 the chain carries N6-succinyllysine. Tyr-381 contributes to the substrate binding site. 2 positions are modified to N6-succinyllysine: Lys-420 and Lys-454. The active-site Proton donor is the Tyr-465. Lys-504 is modified (N6-succinyllysine). Position 508 is an N6-acetyllysine; alternate (Lys-508). N6-succinyllysine; alternate is present on Lys-508. Cys-521 is lipidated: S-(15-deoxy-Delta12,14-prostaglandin J2-9-yl)cysteine. Catalysis depends on His-523, which acts as the Proton acceptor. The Microbody targeting signal motif lies at 552–554 (SKI). Lys-553 is subject to N6-succinyllysine.

It belongs to the AB hydrolase superfamily. Epoxide hydrolase family. As to quaternary structure, homodimer. The cofactor is Mg(2+). In terms of processing, the N-terminus is blocked. The covalent modification of cysteine by 15-deoxy-Delta12,14-prostaglandin-J2 is autocatalytic and reversible. It may occur as an alternative to other cysteine modifications, such as S-nitrosylation and S-palmitoylation. Detected in liver, intestine, ovary and kidney. Detected at low levels in heart and muscle.

Its subcellular location is the cytoplasm. It is found in the peroxisome. The catalysed reaction is an epoxide + H2O = an ethanediol. It catalyses the reaction (9S,10S)-10-hydroxy-9-(phosphooxy)octadecanoate + H2O = (9S,10S)-9,10-dihydroxyoctadecanoate + phosphate. It carries out the reaction 8-hydroxy-(11S,12S)-epoxy-(5Z,9E,14Z)-eicosatrienoate + H2O = (8,11R,12S)-trihydroxy-(5Z,9E,14Z)-eicosatrienoate. The enzyme catalyses 10-hydroxy-(11S,12S)-epoxy- (5Z,8Z,14Z)-eicosatrienoate + H2O = (10,11S,12R)-trihydroxy-(5Z,8Z,14Z)-eicosatrienoate. The catalysed reaction is (8S,9R)-epoxy-(5Z,11Z,14Z)-eicosatrienoate + H2O = (8S,9S)-dihydroxy-(5Z,11Z,14Z)-eicosatrienoate. It catalyses the reaction (11S,12R)-epoxy-(5Z,8Z,14Z)-eicosatrienoate + H2O = (11R,12R)-dihydroxy-(5Z,8Z,14Z)-eicosatrienoate. It carries out the reaction (11S,12R)-epoxy-(5Z,8Z,14Z)-eicosatrienoate + H2O = (11S,12S)-dihydroxy-(5Z,8Z,14Z)-eicosatrienoate. The enzyme catalyses (14S,15R)-epoxy-(5Z,8Z,11Z)-eicosatrienoate + H2O = (14R,15R)-dihydroxy-(5Z,8Z,11Z)-eicosatrienoate. The catalysed reaction is (14S,15R)-epoxy-(5Z,8Z,11Z)-eicosatrienoate + H2O = (14S,15S)-dihydroxy-(5Z,8Z,11Z)-eicosatrienoate. It catalyses the reaction (11R,12S)-epoxy-(5Z,8Z,14Z)-eicosatrienoate + H2O = (11S,12S)-dihydroxy-(5Z,8Z,14Z)-eicosatrienoate. It carries out the reaction (11R,12S)-epoxy-(5Z,8Z,14Z)-eicosatrienoate + H2O = (11R,12R)-dihydroxy-(5Z,8Z,14Z)-eicosatrienoate. The enzyme catalyses (8S,9R)-epoxy-(5Z,11Z,14Z)-eicosatrienoate + H2O = (8R,9R)-dihydroxy-(5Z,11Z,14Z)-eicosatrienoate. The catalysed reaction is 12-phosphooxy-(9Z)-octadecenoate + H2O = 12-hydroxy-(9Z)-octadecenoate + phosphate. It catalyses the reaction 12-phosphooxy-(9E)-octadecenoate + H2O = 12-hydroxy-(9E)-octadecenoate + phosphate. It carries out the reaction 12-(phosphooxy)octadecanoate + H2O = 12-hydroxyoctadecanoate + phosphate. The enzyme catalyses 8,9-epoxy-(5Z,11Z,14Z)-eicosatrienoate + H2O = 8,9-dihydroxy-(5Z,11Z,14Z)-eicosatrienoate. The catalysed reaction is 11,12-epoxy-(5Z,8Z,14Z)-eicosatrienoate + H2O = 11,12-dihydroxy-(5Z,8Z,14Z)-eicosatrienoate. It catalyses the reaction 14,15-epoxy-(5Z,8Z,11Z)-eicosatrienoate + H2O = 14,15-dihydroxy-(5Z,8Z,11Z)-eicosatrienoate. It carries out the reaction 9,10-epoxy-(12Z)-octadecenoate + H2O = 9,10-dihydroxy-(12Z)-octadecenoate. The enzyme catalyses 1-tetradecanoyl-sn-glycerol 3-phosphate + H2O = 1-tetradecanoyl-sn-glycerol + phosphate. The catalysed reaction is 1-octadecanoyl-sn-glycero-3-phosphate + H2O = 1-octadecanoyl-sn-glycerol + phosphate. It catalyses the reaction 1-(5Z,8Z,11Z,14Z-eicosatetraenoyl)-sn-glycero-3-phosphate + H2O = 1-(5Z,8Z,11Z,14Z-eicosatetraenoyl)-sn-glycerol + phosphate. It carries out the reaction 1-hexadecanoyl-sn-glycero-3-phosphate + H2O = 1-hexadecanoyl-sn-glycerol + phosphate. The enzyme catalyses 1-(9Z-octadecenoyl)-sn-glycero-3-phosphate + H2O = 1-(9Z-octadecenoyl)-sn-glycerol + phosphate. The catalysed reaction is (14R,15S)-epoxy-(5Z,8Z,11Z)-eicosatrienoate + H2O = (14R,15R)-dihydroxy-(5Z,8Z,11Z)-eicosatrienoate. With respect to regulation, inhibited by 1-(1-acetylpiperidin-4-yl)-3-(4-(trifl uoromethoxy)phenyl)urea (TPAU), 1-cyclohexyl-3-dodecylurea (CDU), 12-(3-adamantan-1-yl-ureido)-dodecanoic acid (AUDA), 1-((3S, 5S, 7S)-adamantan-1-yl)-3-(5-(2-(2-ethoxyethoxy) ethoxy)pentyl)urea (AEPU), N-adamantyl-N[']-cyclohexyl urea (ACU), 4-(((1S, 4S)-4-(3-((3S, 5S, 7S)-adamantan-1-yl) ureido)cyclohexyl)oxy)benzoic acid (c-AUCB), 4-(((1R, 4R)-4-(3-((3S, 5S, 7S)-adamantan-1-yl)ureido)cyclohexyl)oxy)benzoic acid (t-AUCB), 4-(((1R, 4R)-4-(3-(4(trifluoromethoxy)phenyl)ureido)cyclohexyl)oxy)benzoic acid (t-TAUCB) and to a lesser extent by 8-(3-((3S, 5S, 7S)-adamantan-1-yl)ureido) octanoic acid (AUOA). Phosphatase activity is inhibited by dodecyl-phosphate, phospholipids such as phospho-lysophosphatidic acids and fatty acids such as palmitic acid and lauric acid. In terms of biological role, bifunctional enzyme. The C-terminal domain has epoxide hydrolase activity and acts on epoxides (alkene oxides, oxiranes) and arene oxides. Plays a role in xenobiotic metabolism by degrading potentially toxic epoxides. Also determines steady-state levels of physiological mediators. Functionally, bifunctional enzyme. The N-terminal domain has lipid phosphatase activity, with the highest activity towards threo-9,10-phosphonooxy-hydroxy-octadecanoic acid, followed by erythro-9,10-phosphonooxy-hydroxy-octadecanoic acid, 12-phosphonooxy-octadec-9Z-enoic acid and 12-phosphonooxy-octadec-9E-enoic acid. Has phosphatase activity toward lyso-glycerophospholipids with also some lower activity toward lysolipids of sphingolipid and isoprenoid phosphates. The sequence is that of Bifunctional epoxide hydrolase 2 from Mus musculus (Mouse).